The chain runs to 350 residues: Chemokine C-C motif receptor-like 2 (350 aa).

Residues 1–43 (MANYTSAPEDDYDVFIEDDLSNDERELCSPYDPQALLAQLVPY) are Extracellular-facing. Residue N3 is glycosylated (N-linked (GlcNAc...) asparagine). The chain crosses the membrane as a helical span at residues 44-64 (LFITVFLVGLLDNILVVLIMV). The Cytoplasmic segment spans residues 65–74 (KYKGLKQVEN). The helical transmembrane segment at 75–95 (IYLLNLAVCNLCFLCTLPFWV) threads the bilayer. The Extracellular segment spans residues 96 to 110 (HMAWHEGDPGEPLCK). C109 and C187 form a disulfide bridge. A helical transmembrane segment spans residues 111–131 (ILLVLYSVGLFSEAFFNVLLT). At 132–149 (VQRYQKFFQMRGFFSATR) the chain is on the cytoplasmic side. Residues 150–170 (MVAGSIFPSALVWVIAVLVML) traverse the membrane as a helical segment. At 171–204 (PELAFYKPQMENQKYKCFFGRPLFLPADETFWKH) the chain is on the extracellular side. The chain crosses the membrane as a helical span at residues 205–225 (FLTLKMNILGFLLPLFVFVFC). Residues 226–244 (YVRMRRTLKFGERGYDLFK) are Cytoplasmic-facing. The helical transmembrane segment at 245–265 (LVFTIMVVFLLMWGPYNIALF) threads the bilayer. Residues 266–288 (LSAFNEHFSLHGCESSHNLDRST) lie on the Extracellular side of the membrane. A helical transmembrane segment spans residues 289–309 (LITKIIATTHCCVNPLLYVFF). Residues 310–350 (DEAFRKHLYHFCHLCNDTAPQPTEEPAQGTSREEPCLSTKM) lie on the Cytoplasmic side of the membrane. Residues 329–350 (PQPTEEPAQGTSREEPCLSTKM) form a disordered region.

Belongs to the G-protein coupled receptor 1 family.

It localises to the cell membrane. Receptor for CCL19 and chemerin/RARRES2. Does not appear to be a signaling receptor, but may have a role in modulating chemokine-triggered immune responses by capturing and internalizing CCL19 or by presenting RARRES2 ligand to CMKLR1, a functional signaling receptor. Plays a critical role for the development of Th2 responses. The polypeptide is Chemokine C-C motif receptor-like 2 (CCRL2) (Sus scrofa (Pig)).